Reading from the N-terminus, the 384-residue chain is MTDALTITRDLIRCPSVTPADAGALGVLEALLKQAGFTTHRITFSEAGTADIDNLYARIGTEGPHITFAGHTDVVPPGDEAAWSLPAFSGEVRDGYIYGRGAVDMKGGIACSVAAALDYLRDHDGQPKGSISFLITGDEEDVSINGTIKLLQWAAERGEKFDHCVLGEPSNQEVMGDCIKIGRRGSQSGTLIVEGRQGHVAYPHRAENPVPDISRLIVALSDEPLDHGSAQFQPSNLEFTSVDVGNTASNVIPGLARAKFNIRYNDCHTQDSLRALVEERLAKACGNRIRAHIDWLPSNSKVFLTKPGPFTDLAVAAIESVTGRKPELSTTGGTSDARFIASYCPVIEFGLVGQTMHQIDERASVADIATLTKIYRGILDRYFA.

Zn(2+) is bound at residue His71. The active site involves Asp73. Asp104 contributes to the Zn(2+) binding site. The active-site Proton acceptor is Glu139. Zn(2+)-binding residues include Glu140, Glu168, and His357.

It belongs to the peptidase M20A family. DapE subfamily. Homodimer. Requires Zn(2+) as cofactor. It depends on Co(2+) as a cofactor.

The catalysed reaction is N-succinyl-(2S,6S)-2,6-diaminopimelate + H2O = (2S,6S)-2,6-diaminopimelate + succinate. Its pathway is amino-acid biosynthesis; L-lysine biosynthesis via DAP pathway; LL-2,6-diaminopimelate from (S)-tetrahydrodipicolinate (succinylase route): step 3/3. Catalyzes the hydrolysis of N-succinyl-L,L-diaminopimelic acid (SDAP), forming succinate and LL-2,6-diaminopimelate (DAP), an intermediate involved in the bacterial biosynthesis of lysine and meso-diaminopimelic acid, an essential component of bacterial cell walls. This is Succinyl-diaminopimelate desuccinylase from Bradyrhizobium sp. (strain BTAi1 / ATCC BAA-1182).